Here is a 103-residue protein sequence, read N- to C-terminus: Putative double-stranded DNA mimic protein HAPS_1002 (103 aa).

It belongs to the putative dsDNA mimic protein family.

Functionally, may act as a double-stranded DNA (dsDNA) mimic. Probably regulates the activity of a dsDNA-binding protein. This Glaesserella parasuis serovar 5 (strain SH0165) (Haemophilus parasuis) protein is Putative double-stranded DNA mimic protein HAPS_1002.